Here is a 105-residue protein sequence, read N- to C-terminus: Large ribosomal subunit protein uL24 (105 aa).

It belongs to the universal ribosomal protein uL24 family. Part of the 50S ribosomal subunit.

One of two assembly initiator proteins, it binds directly to the 5'-end of the 23S rRNA, where it nucleates assembly of the 50S subunit. Functionally, one of the proteins that surrounds the polypeptide exit tunnel on the outside of the subunit. The protein is Large ribosomal subunit protein uL24 of Saccharophagus degradans (strain 2-40 / ATCC 43961 / DSM 17024).